Here is an 88-residue protein sequence, read N- to C-terminus: Beta-insect excitatory toxin BmKIT1 (88 aa).

A signal peptide spans 1–18 (MKFFLIFLVIFPIMGVLG). The LCN-type CS-alpha/beta domain occupies 20–83 (KNGYAVDSSG…IKDATKSYCD (64 aa)). 4 disulfides stabilise this stretch: cysteine 34-cysteine 55, cysteine 40-cysteine 60, cysteine 44-cysteine 62, and cysteine 56-cysteine 82. The residue at position 87 (isoleucine 87) is an Isoleucine amide.

This sequence belongs to the long (4 C-C) scorpion toxin superfamily. Sodium channel inhibitor family. Beta subfamily. As to expression, expressed by the venom gland.

The protein resides in the secreted. In terms of biological role, excitatory insect beta-toxins induce a spastic paralysis. They bind voltage-independently at site-4 of sodium channels (Nav) and shift the voltage of activation toward more negative potentials thereby affecting sodium channel activation and promoting spontaneous and repetitive firing. This toxin is active only on insects. This Olivierus martensii (Manchurian scorpion) protein is Beta-insect excitatory toxin BmKIT1.